The primary structure comprises 112 residues: Putative inner membrane protein YafU (112 aa).

Topologically, residues 1 to 21 (MSSERDLVNFLGDFSMDVAKA) are cytoplasmic. Residues 22-42 (VIAGGVATAIGSLASFACVSF) traverse the membrane as a helical segment. A topological domain (periplasmic) is located at residue Gly43. Residues 44 to 64 (FPVILVGGAILLTGIVCTVVL) form a helical membrane-spanning segment. At 65 to 112 (NEIDAQCHLSEKLKYAIRDGLKRQQELDKWKRENMTPFMYVLNTPPVI) the chain is on the cytoplasmic side.

It is found in the cell inner membrane. The chain is Putative inner membrane protein YafU (yafU) from Escherichia coli (strain K12).